A 915-amino-acid chain; its full sequence is Copper-exporting P-type ATPase (915 aa).

HMA domains are found at residues 11-72 (NHFA…YQGG) and 73-134 (TEQT…YQAI). Cys-22, Cys-25, Cys-84, and Cys-87 together coordinate Cu(+). Residues 142 to 169 (FAPAASIDEKETDTPDAENSSNTEATEA) form a disordered region. A compositionally biased stretch (polar residues) spans 158-169 (AENSSNTEATEA). The HMA 3 domain maps to 172 to 236 (QTLSLLIKGM…AIQSSGYQAE (65 aa)). Residues Cys-183 and Cys-186 each contribute to the Cu(+) site. Transmembrane regions (helical) follow at residues 265–285 (LGIA…NMMI), 293–313 (VWGG…RHFF), 329–349 (TLVA…VAWP), 359–379 (VYFE…YIET), 474–494 (LVIT…IQMV), 514–534 (VFVP…YLYG), and 541–561 (YMLV…LGLA). Catalysis depends on Asp-598, which acts as the 4-aspartylphosphate intermediate. Mg(2+) is bound by residues Asp-796 and Asp-800. 2 consecutive transmembrane segments (helical) span residues 801–821 (APAL…DVAI) and 865–885 (IPIA…PVVA).

It belongs to the cation transport ATPase (P-type) (TC 3.A.3) family. Type IB subfamily.

Its subcellular location is the cell membrane. It carries out the reaction Cu(+)(in) + ATP + H2O = Cu(+)(out) + ADP + phosphate + H(+). Its function is as follows. Involved in copper export. The chain is Copper-exporting P-type ATPase (copA) from Vibrio cholerae serotype O1 (strain ATCC 39315 / El Tor Inaba N16961).